The chain runs to 124 residues: Fluoride-specific ion channel FluC (124 aa).

4 consecutive transmembrane segments (helical) span residues 5–25 (ILAV…AGTW), 38–58 (TLAV…WFLL), 69–89 (GLIV…LDTL), and 97–117 (ALIA…ATWA). Na(+) is bound by residues glycine 76 and threonine 79.

Belongs to the fluoride channel Fluc/FEX (TC 1.A.43) family.

The protein localises to the cell inner membrane. It catalyses the reaction fluoride(in) = fluoride(out). Its activity is regulated as follows. Na(+) is not transported, but it plays an essential structural role and its presence is essential for fluoride channel function. Its function is as follows. Fluoride-specific ion channel. Important for reducing fluoride concentration in the cell, thus reducing its toxicity. In Pseudomonas fluorescens (strain SBW25), this protein is Fluoride-specific ion channel FluC.